A 312-amino-acid polypeptide reads, in one-letter code: Olfactory receptor-like protein COR4 (312 aa).

Over 1 to 26 (MASGNCTTPTTFILSGLTDNPGLQMP) the chain is Extracellular. Asn-5 carries N-linked (GlcNAc...) asparagine glycosylation. Residues 27-49 (LFMVFLAIYTITLLTNLGLIALI) traverse the membrane as a helical segment. At 50–57 (SVDLHLQT) the chain is on the cytoplasmic side. A helical transmembrane segment spans residues 58-79 (PMYIFLQNLSFTDAAYSTVITP). The Extracellular segment spans residues 80–100 (KMLATFLEERKTISYIGCILQ). A disulfide bond links Cys-97 and Cys-179. A helical transmembrane segment spans residues 101–120 (YFSFVLLTVTESLLLAVMAY). At 121–139 (DRYVAICKPLLYPSIMTKA) the chain is on the cytoplasmic side. A helical transmembrane segment spans residues 140–164 (VCWRLVKGLYSLAFLNSLVHTSGLL). Residues 165–205 (KLSFCSSNVVNHFFCDNSPLFQISSSSTTLNELLVFIFGSL) are Extracellular-facing. Residues 206–226 (FAMSSIITILISYVFIILTVV) form a helical membrane-spanning segment. At 227 to 239 (RIRSKDGKYKAFS) the chain is on the cytoplasmic side. Residues 240 to 260 (TCTSHLMAVSLFHGTVIFMYL) traverse the membrane as a helical segment. Residues 261-271 (RPVKLFSLDTD) are Extracellular-facing. Residues 272–292 (KIASLFYTVVIPMLNPLIYSW) traverse the membrane as a helical segment. Residues 293–312 (RNKEVKDALRRVIATNVWIH) lie on the Cytoplasmic side of the membrane.

This sequence belongs to the G-protein coupled receptor 1 family.

It localises to the cell membrane. Functionally, odorant receptor. The polypeptide is Olfactory receptor-like protein COR4 (COR4) (Gallus gallus (Chicken)).